Reading from the N-terminus, the 585-residue chain is Eukaryotic translation initiation factor 3 subunit D (585 aa).

Positions 110-130 (GGGTVFRGRGQRGVGQRGGRA) are enriched in gly residues. Residues 110–152 (GGGTVFRGRGQRGVGQRGGRAGFQRVGAGRGQGGDRYYDNRSA) form a disordered region. The interval 300 to 314 (SIDLVTVNENAADAP) is RNA gate. The disordered stretch occupies residues 560–585 (VPPNTFEEDDEAAEEQEEKAEDESEE). The span at 565–585 (FEEDDEAAEEQEEKAEDESEE) shows a compositional bias: acidic residues.

Belongs to the eIF-3 subunit D family. In terms of assembly, component of the eukaryotic translation initiation factor 3 (eIF-3) complex.

Its subcellular location is the cytoplasm. In terms of biological role, mRNA cap-binding component of the eukaryotic translation initiation factor 3 (eIF-3) complex, which is involved in protein synthesis of a specialized repertoire of mRNAs and, together with other initiation factors, stimulates binding of mRNA and methionyl-tRNAi to the 40S ribosome. The eIF-3 complex specifically targets and initiates translation of a subset of mRNAs involved in cell proliferation. In the eIF-3 complex, eif3d specifically recognizes and binds the 7-methylguanosine cap of a subset of mRNAs. The protein is Eukaryotic translation initiation factor 3 subunit D of Aspergillus fumigatus (strain CBS 144.89 / FGSC A1163 / CEA10) (Neosartorya fumigata).